The sequence spans 443 residues: Ribosomal protein uS12 methylthiotransferase RimO (443 aa).

The 111-residue stretch at 5-115 (PNIGFISLGC…VMKHVHKYVP (111 aa)) folds into the MTTase N-terminal domain. Residues Cys14, Cys50, Cys79, Cys147, Cys151, and Cys154 each contribute to the [4Fe-4S] cluster site. Residues 133-374 (LTPKHYAYLK…MQLQQKISAE (242 aa)) form the Radical SAM core domain. The 67-residue stretch at 377–443 (RQKIGRTLSV…ADEYDLWGEI (67 aa)) folds into the TRAM domain.

Belongs to the methylthiotransferase family. RimO subfamily. [4Fe-4S] cluster is required as a cofactor.

It localises to the cytoplasm. It carries out the reaction L-aspartate(89)-[ribosomal protein uS12]-hydrogen + (sulfur carrier)-SH + AH2 + 2 S-adenosyl-L-methionine = 3-methylsulfanyl-L-aspartate(89)-[ribosomal protein uS12]-hydrogen + (sulfur carrier)-H + 5'-deoxyadenosine + L-methionine + A + S-adenosyl-L-homocysteine + 2 H(+). Functionally, catalyzes the methylthiolation of an aspartic acid residue of ribosomal protein uS12. This Histophilus somni (strain 2336) (Haemophilus somnus) protein is Ribosomal protein uS12 methylthiotransferase RimO.